Here is a 303-residue protein sequence, read N- to C-terminus: Tyrosine recombinase XerC (303 aa).

Positions 6-92 (ASLAPQVEAF…ALRSFLNWLV (87 aa)) constitute a Core-binding (CB) domain. A Tyr recombinase domain is found at 113-292 (HLPKNIDVDE…DFQHLATVYD (180 aa)). Residues Arg152, Lys176, His244, Arg247, and His270 contribute to the active site. The active-site O-(3'-phospho-DNA)-tyrosine intermediate is the Tyr279.

It belongs to the 'phage' integrase family. XerC subfamily. In terms of assembly, forms a cyclic heterotetrameric complex composed of two molecules of XerC and two molecules of XerD, in which XerC interacts with XerD via its C-terminal region, XerD interacts with XerC via its C-terminal region and so on.

Its subcellular location is the cytoplasm. With respect to regulation, ftsK may regulate the catalytic switch between XerC and XerD in the heterotetrameric complex during the two steps of the recombination process. In terms of biological role, site-specific tyrosine recombinase, which acts by catalyzing the cutting and rejoining of the recombining DNA molecules. Binds cooperatively to specific DNA consensus sequences that are separated from XerD binding sites by a short central region, forming the heterotetrameric XerC-XerD complex that recombines DNA substrates. The complex is essential to convert dimers of the bacterial chromosome into monomers to permit their segregation at cell division. It also contributes to the segregational stability of plasmids. In the complex XerC specifically exchanges the top DNA strands. The polypeptide is Tyrosine recombinase XerC (Yersinia pestis).